A 178-amino-acid chain; its full sequence is Large ribosomal subunit protein uL10 (178 aa).

The protein belongs to the universal ribosomal protein uL10 family. Part of the ribosomal stalk of the 50S ribosomal subunit. The N-terminus interacts with L11 and the large rRNA to form the base of the stalk. The C-terminus forms an elongated spine to which L12 dimers bind in a sequential fashion forming a multimeric L10(L12)X complex.

In terms of biological role, forms part of the ribosomal stalk, playing a central role in the interaction of the ribosome with GTP-bound translation factors. This Albidiferax ferrireducens (strain ATCC BAA-621 / DSM 15236 / T118) (Rhodoferax ferrireducens) protein is Large ribosomal subunit protein uL10.